Reading from the N-terminus, the 377-residue chain is Galactoside alpha-(1,2)-fucosyltransferase 1 (377 aa).

Topologically, residues 1 to 8 (MWTPSRRQ) are cytoplasmic. The chain crosses the membrane as a helical; Signal-anchor for type II membrane protein span at residues 9 to 26 (LCLAFLLVCVLSAGSFFF). Residues 27–377 (HLNGGNFFRN…WKPDSLFRLV (351 aa)) lie on the Lumenal side of the membrane. Asparagine 67, asparagine 303, and asparagine 329 each carry an N-linked (GlcNAc...) asparagine glycan.

Belongs to the glycosyltransferase 11 family. In terms of tissue distribution, in the adult, highly expressed in pancreas, testis and epididymis and to a lesser extent in thymus, lung, stomach, small intestine, colon, spleen and uterus. Not expressed in brain, heart, skeletal muscle, kidney, liver and bone marrow. Expressed in epididymis and testis.

The protein resides in the golgi apparatus. Its subcellular location is the golgi stack membrane. The catalysed reaction is a beta-D-galactosyl-(1-&gt;4)-N-acetyl-beta-D-glucosaminyl derivative + GDP-beta-L-fucose = an alpha-L-Fuc-(1-&gt;2)-beta-D-Gal-(1-&gt;4)-beta-D-GlcNAc derivative + GDP + H(+). The enzyme catalyses a ganglioside GA1 + GDP-beta-L-fucose = a ganglioside Fuc-GA1 + GDP + H(+). It catalyses the reaction a beta-D-Gal-(1-&gt;3)-beta-D-GlcNAc-(1-&gt;3)-beta-D-Gal-(1-&gt;4)-beta-D-Glc-(1&lt;-&gt;1')-Cer(d18:1(4E)) + GDP-beta-L-fucose = alpha-L-fucosyl-(1-&gt;2)- beta-D-galactosyl-(1-&gt;3)-N-acetyl-beta-D-glucosaminyl-(1-&gt;3)-beta-D-galactosyl-(1-&gt;4)-beta-D-glucosyl-(1&lt;-&gt;1')-N-acylsphing-4-enine + GDP + H(+). It carries out the reaction a neolactoside nLc4Cer(d18:1(4E)) + GDP-beta-L-fucose = a neolactoside IV(2)-alpha-Fuc-nLc4Cer(d18:1(4E)) + GDP + H(+). The catalysed reaction is a ganglioside GM1 + GDP-beta-L-fucose = a ganglioside Fuc-GM1 + GDP + H(+). The enzyme catalyses beta-D-galactosyl-(1-&gt;3)-N-acetyl-D-galactosamine + GDP-beta-L-fucose = alpha-L-fucosyl-(1-&gt;2)-beta-D-galactosyl-(1-&gt;3)-N-acetyl-D-galactosamine + GDP + H(+). The protein operates within protein modification; protein glycosylation. Functionally, catalyzes the transfer of L-fucose, from a guanosine diphosphate-beta-L-fucose, to the terminal galactose residue of glycoconjugates through an alpha(1,2) linkage leading to H antigen synthesis that is an intermediate substrate in the synthesis of ABO blood group antigens. H antigen is essential for maturation of the glomerular layer of the main olfactory bulb, in cell migration and early cell-cell contacts during tumor associated angiogenesis. Preferentially fucosylates soluble lactose and to a lesser extent, fucosylates glycolipids gangliosides GA1 and GM1a. The protein is Galactoside alpha-(1,2)-fucosyltransferase 1 of Mus musculus (Mouse).